The chain runs to 266 residues: uncharacterized protein (266 aa).

Residues 1–22 form the signal peptide; it reads MGYLKRLVLYIVIMVMSVFIIG. A lipid anchor (N-palmitoyl cysteine) is attached at Cys23. Cys23 is lipidated: S-diacylglycerol cysteine.

It belongs to the staphylococcal tandem lipoprotein family.

It localises to the cell membrane. This is an uncharacterized protein from Staphylococcus aureus (strain USA300).